Consider the following 233-residue polypeptide: Nucleoside diphosphate kinase 2, chloroplastic (233 aa).

Residues 1–67 (MEAMSGLSSP…LISHSLPRKK (67 aa)) constitute a chloroplast transit peptide. 6 residues coordinate ATP: Lys-93, Phe-141, Arg-169, Thr-175, Arg-186, and Asn-196. His-199 serves as the catalytic Pros-phosphohistidine intermediate.

It belongs to the NDK family. It depends on Mg(2+) as a cofactor.

The protein localises to the plastid. The protein resides in the chloroplast. The catalysed reaction is a 2'-deoxyribonucleoside 5'-diphosphate + ATP = a 2'-deoxyribonucleoside 5'-triphosphate + ADP. It carries out the reaction a ribonucleoside 5'-diphosphate + ATP = a ribonucleoside 5'-triphosphate + ADP. In terms of biological role, major role in the synthesis of nucleoside triphosphates other than ATP. The ATP gamma phosphate is transferred to the NDP beta phosphate via a ping-pong mechanism, using a phosphorylated active-site intermediate. The polypeptide is Nucleoside diphosphate kinase 2, chloroplastic (NDPK2) (Spinacia oleracea (Spinach)).